The sequence spans 149 residues: Large ribosomal subunit protein bL9 (149 aa).

The protein belongs to the bacterial ribosomal protein bL9 family.

In terms of biological role, binds to the 23S rRNA. The sequence is that of Large ribosomal subunit protein bL9 from Mannheimia succiniciproducens (strain KCTC 0769BP / MBEL55E).